The chain runs to 607 residues: UvrABC system protein C (607 aa).

The GIY-YIG domain occupies 16–94 (HLPGVYRHLD…IKSLRPRYNI (79 aa)). Positions 203 to 238 (REVMDEIEARMQQASGELRFEEAAVLRDQMGSLSKV) constitute a UVR domain.

This sequence belongs to the UvrC family. In terms of assembly, interacts with UvrB in an incision complex.

It localises to the cytoplasm. Functionally, the UvrABC repair system catalyzes the recognition and processing of DNA lesions. UvrC both incises the 5' and 3' sides of the lesion. The N-terminal half is responsible for the 3' incision and the C-terminal half is responsible for the 5' incision. In Bordetella avium (strain 197N), this protein is UvrABC system protein C.